Consider the following 2462-residue polypeptide: Non-reducing polyketide synthase ausA (2462 aa).

The interval 16–253 (VFFGPVYPEL…HTADHIPAMK (238 aa)) is N-terminal acylcarrier protein transacylase domain (SAT). Residues 385 to 801 (SAPIAVTGFA…GSNAVIVVKE (417 aa)) enclose the Ketosynthase family 3 (KS3) domain. Residues Cys550, His685, and His724 each act as for beta-ketoacyl synthase activity in the active site. The malonyl-CoA:ACP transacylase (MAT) domain stretch occupies residues 904–1208 (LCFGGQTGDT…LPIDLQESTA (305 aa)). Residue Ser991 is the For acyl/malonyl transferase activity of the active site. Positions 1274 to 1403 (HDDGLLQLVE…GKVLLDPQAA (130 aa)) are N-terminal hotdog fold. In terms of domain architecture, PKS/mFAS DH spans 1274-1581 (HDDGLLQLVE…FTSVSIQSLK (308 aa)). The interval 1277-1580 (GLLQLVERDA…TFTSVSIQSL (304 aa)) is product template (PT) domain. Catalysis depends on His1307, which acts as the Proton acceptor; for dehydratase activity. A C-terminal hotdog fold region spans residues 1431–1581 (SSNGLKRATV…FTSVSIQSLK (151 aa)). The active-site Proton donor; for dehydratase activity is Asp1489. Residues 1613 to 1690 (VSDDHHLRAV…GLAHRISPSS (78 aa)) form the Carrier domain. Ser1650 is subject to O-(pantetheine 4'-phosphoryl)serine. A methyltransferase (CMeT) domain region spans residues 1850-2083 (QHASEHKLLR…GFNWVDWTDN (234 aa)). Residues 2112–2462 (TPARVETVRY…YEFLRQHVAV (351 aa)) form a thioesterase (TE) domain region. Residues Ser2235, Asp2398, and His2430 each act as for thioesterase activity in the active site.

It carries out the reaction 3 malonyl-CoA + acetyl-CoA + 2 S-adenosyl-L-methionine = 3,5-dimethylorsellinate + 2 S-adenosyl-L-homocysteine + 3 CO2 + 4 CoA. The protein operates within secondary metabolite biosynthesis; terpenoid biosynthesis. Functionally, non-reducing polyketide synthase; part of the gene cluster that mediates the biosynthesis of calidodehydroaustin, a fungal meroterpenoid. The first step of the pathway is the synthesis of 3,5-dimethylorsellinic acid by the polyketide synthase ausA. 3,5-dimethylorsellinic acid is then prenylated by the polyprenyl transferase ausN. Further epoxidation by the FAD-dependent monooxygenase ausM and cyclization by the probable terpene cyclase ausL lead to the formation of protoaustinoid A. Protoaustinoid A is then oxidized to spiro-lactone preaustinoid A3 by the combined action of the FAD-binding monooxygenases ausB and ausC, and the dioxygenase ausE. Acid-catalyzed keto-rearrangement and ring contraction of the tetraketide portion of preaustinoid A3 by ausJ lead to the formation of preaustinoid A4. The aldo-keto reductase ausK, with the help of ausH, is involved in the next step by transforming preaustinoid A4 into isoaustinone which is in turn hydroxylated by the P450 monooxygenase ausI to form austinolide. The cytochrome P450 monooxygenase ausG modifies austinolide to austinol. Austinol is further acetylated to austin by the O-acetyltransferase ausP, which spontaneously changes to dehydroaustin. The cytochrome P450 monooxygenase ausR then converts dehydroaustin is into 7-dehydrodehydroaustin. The hydroxylation catalyzed by ausR permits the O-acetyltransferase ausQ to add an additional acetyl group to the molecule, leading to the formation of acetoxydehydroaustin. The short chain dehydrogenase ausT catalyzes the reduction of the double bond present between carbon atoms 1 and 2 to convert 7-dehydrodehydroaustin into 1,2-dihydro-7-hydroxydehydroaustin. AusQ catalyzes not only an acetylation reaction but also the addition of the PKS ausV diketide product to 1,2-dihydro-7-hydroxydehydroaustin, forming precalidodehydroaustin. Finally, the iron/alpha-ketoglutarate-dependent dioxygenase converts precalidodehydroaustin into calidodehydroaustin. This is Non-reducing polyketide synthase ausA from Aspergillus calidoustus.